The sequence spans 102 residues: uncharacterized protein (102 aa).

Residues I7–Q23 form a helical membrane-spanning segment.

It is found in the membrane. This is an uncharacterized protein from Haemophilus influenzae (strain ATCC 51907 / DSM 11121 / KW20 / Rd).